The sequence spans 143 residues: Peptide methionine sulfoxide reductase MsrB (143 aa).

Residues 16-139 (DAELRRRLTP…NSAALNFEAK (124 aa)) form the MsrB domain. Residues Cys55, Cys58, Cys104, and Cys107 each contribute to the Zn(2+) site. Residue Cys128 is the Nucleophile of the active site.

Belongs to the MsrB Met sulfoxide reductase family. The cofactor is Zn(2+).

It catalyses the reaction L-methionyl-[protein] + [thioredoxin]-disulfide + H2O = L-methionyl-(R)-S-oxide-[protein] + [thioredoxin]-dithiol. The sequence is that of Peptide methionine sulfoxide reductase MsrB from Burkholderia pseudomallei (strain 1710b).